Consider the following 690-residue polypeptide: Elongation factor G (690 aa).

The 276-residue stretch at 8–283 (EDYRNFGIMA…AVVDYLPSPI (276 aa)) folds into the tr-type G domain. GTP contacts are provided by residues 17-24 (AHIDAGKT), 81-85 (DTPGH), and 135-138 (NKMD).

It belongs to the TRAFAC class translation factor GTPase superfamily. Classic translation factor GTPase family. EF-G/EF-2 subfamily.

Its subcellular location is the cytoplasm. In terms of biological role, catalyzes the GTP-dependent ribosomal translocation step during translation elongation. During this step, the ribosome changes from the pre-translocational (PRE) to the post-translocational (POST) state as the newly formed A-site-bound peptidyl-tRNA and P-site-bound deacylated tRNA move to the P and E sites, respectively. Catalyzes the coordinated movement of the two tRNA molecules, the mRNA and conformational changes in the ribosome. The protein is Elongation factor G of Bradyrhizobium diazoefficiens (strain JCM 10833 / BCRC 13528 / IAM 13628 / NBRC 14792 / USDA 110).